Here is a 636-residue protein sequence, read N- to C-terminus: MPSQSNNVITSSTASSSMSSSSNSSDASSTSSSNTNNAHSSNNQFVSGQLNLVGNTHTKINDNYEIISKIGEGISGSVFKAIKKGTEEMVALKNFKGWTEGDRASKEECSLLQQLRHIPYITPVIDIYTNFETSEYIIVFPYFEHDLSGLLSEHRLSIPQVKCYFKQLLEGINEIHNAGVMHRDIKAANLLVNNKGSLFIGDLGTATSYTKRSVFSSKVVTLWYRAPELLLGSTQYGPEIDMWSIGCVLIELVTSRNFLPGSSEQQQLEAICKLCGTPTDEIWPNVSQLQNFNQISHLPVYPSRLRTVFKNFSNDFIELLEGLLTLNPKKRLTAEQALQSPFFTNHPLPFKPENMPGYQPIHVLEAVQKRVQQQQELEQQKKQEEQKKQQEEQKKLEDQKKQEEQKKQEDLLKRQRLLKRQQELKKQQDEQRQQELIKKQQEQEQLRLKVEHEKQRQEQERLRLIQQEQERLKRQQQEHEQRLQREQQQQLNQLQQQKESPLNNSYGKINLKRSLDLVNDIRNYCTSETESEYESDEEDFYTEEEVEDYSSDEEDDYYNAQSNKSLYTPIKAMIQQHNNNQQHQQQYPYSQQQQEPISSNPFLQPPKKQRTASTGFNNNNGNNNNNNNLSTPLTIH.

The tract at residues 1-41 (MPSQSNNVITSSTASSSMSSSSNSSDASSTSSSNTNNAHSS) is disordered. The Protein kinase domain maps to 64-343 (YEIISKIGEG…AEQALQSPFF (280 aa)). ATP-binding positions include 70–78 (IGEGISGSV) and Lys93. Asp184 serves as the catalytic Proton acceptor. 4 disordered regions span residues 378 to 408 (EQQK…QKKQ), 473 to 506 (KRQQ…NNSY), 527 to 555 (SETE…DEED), and 579 to 636 (NNQQ…LTIH). Positions 473 to 485 (KRQQQEHEQRLQR) are enriched in basic and acidic residues. Residues 486 to 499 (EQQQQLNQLQQQKE) are compositionally biased toward low complexity. Acidic residues predominate over residues 529 to 555 (TESEYESDEEDFYTEEEVEDYSSDEED). Low complexity-rich tracts occupy residues 579 to 594 (NNQQ…QQQQ) and 617 to 628 (NNNNGNNNNNNN).

The protein belongs to the protein kinase superfamily. CMGC Ser/Thr protein kinase family. CDC2/CDKX subfamily.

It carries out the reaction L-seryl-[protein] + ATP = O-phospho-L-seryl-[protein] + ADP + H(+). The enzyme catalyses L-threonyl-[protein] + ATP = O-phospho-L-threonyl-[protein] + ADP + H(+). In Dictyostelium discoideum (Social amoeba), this protein is Probable cyclin-dependent serine/threonine-protein kinase DDB_G0278487.